The sequence spans 523 residues: Occludin (523 aa).

The disordered stretch occupies residues 1–20; the sequence is MSVRPFESPPPYRPDEFKPN. At 1–66 the chain is on the cytoplasmic side; it reads MSVRPFESPP…KWTSPPGVIR (66 aa). The region spanning 60–269 is the MARVEL domain; the sequence is SPPGVIRILS…IIVFAVKTRR (210 aa). The helical transmembrane segment at 67 to 87 threads the bilayer; the sequence is ILSMLVIVMCIAVFACVASTL. The Extracellular portion of the chain corresponds to 88 to 140; the sequence is AWDRAYGTGIFGGSMNYPYGSGFGSYGGGFGGYGYGYGYGYGGYTDPRAAKGF. The helical transmembrane segment at 141–161 threads the bilayer; the sequence is LLAMAAFCFIASLVIFVTSVI. Residues 162–173 lie on the Cytoplasmic side of the membrane; the sequence is RSGMSRTRRYYL. The chain crosses the membrane as a helical span at residues 174–194; sequence IVIIVSAILGIMVFIATIVYI. The Extracellular segment spans residues 195–244; it reads MGVNPTAQASGSMYGSQIYTICSQFYTPGGTGLYVDQYLYHYCVVDPQEA. Cys216 and Cys237 are oxidised to a cystine. A helical transmembrane segment spans residues 245–265; the sequence is IAIVLGFMIIVAFALIIVFAV. Over 266–523 the chain is Cytoplasmic; the sequence is KTRRKMDRYD…MVGDYDRRKT (258 aa). The residue at position 302 (Ser302) is a Phosphoserine. Positions 302-338 are disordered; that stretch reads SAGTQDMPPPPSDYAERVDSPMAYSSNGKVNGKRSYP. Phosphothreonine is present on Thr305. A phosphoserine mark is found at Ser313, Ser321, Ser340, and Ser360. Residues 363-408 form a disordered region; the sequence is DFRQPRYSSNDNLETPSKRTPTKGKAGKAKRTDPDHYETDYTTGGE. Residues 368–381 are compositionally biased toward polar residues; it reads RYSSNDNLETPSKR. Tyr369 is subject to Phosphotyrosine. Residues Ser370 and Ser371 each carry the phosphoserine modification. Residues 382–391 show a composition bias toward basic residues; the sequence is TPTKGKAGKA. Over residues 392–401 the composition is skewed to basic and acidic residues; the sequence is KRTDPDHYET. Tyr399 and Tyr403 each carry phosphotyrosine. Phosphothreonine; by PKC/PRKCH occurs at positions 404 and 405. At Ser409 the chain carries Phosphoserine. Residues 415-523 enclose the OCEL domain; that stretch reads EDWLREYPPI…MVGDYDRRKT (109 aa). Positions 433–489 form a coiled coil; it reads YKRNFDAGLQEYKSLLAELDEVNKELSRLDRELDDYREESEEYMAAADEYNRLKQVK. Residue Ser491 is modified to Phosphoserine.

The protein belongs to the ELL/occludin family. As to quaternary structure, interacts with TJP1/ZO1. Interacts with VAPA. Interacts with CLDN1, CLDN6, CLDN9, CLDN11, CLDN12 and CLDN17. Interacts with PLSCR1. Interacts with LSR, ILDR1 and ILDR2. Interacts with TJP2/ZO2. In terms of processing, dephosphorylated by PTPRJ.

The protein resides in the cell membrane. It is found in the cell junction. Its subcellular location is the tight junction. May play a role in the formation and regulation of the tight junction (TJ) paracellular permeability barrier. May be involved in the organization of actin in endothelial cells. The sequence is that of Occludin (Ocln) from Rattus norvegicus (Rat).